The chain runs to 273 residues: tRNA pseudouridine synthase A (273 aa).

Asp52 (nucleophile) is an active-site residue. Substrate is bound at residue Tyr110.

The protein belongs to the tRNA pseudouridine synthase TruA family. Homodimer.

It catalyses the reaction uridine(38/39/40) in tRNA = pseudouridine(38/39/40) in tRNA. Formation of pseudouridine at positions 38, 39 and 40 in the anticodon stem and loop of transfer RNAs. The sequence is that of tRNA pseudouridine synthase A from Cupriavidus pinatubonensis (strain JMP 134 / LMG 1197) (Cupriavidus necator (strain JMP 134)).